The chain runs to 466 residues: ATP synthase subunit beta (466 aa).

148-155 (GGAGVGKT) lines the ATP pocket.

The protein belongs to the ATPase alpha/beta chains family. F-type ATPases have 2 components, CF(1) - the catalytic core - and CF(0) - the membrane proton channel. CF(1) has five subunits: alpha(3), beta(3), gamma(1), delta(1), epsilon(1). CF(0) has three main subunits: a(1), b(2) and c(9-12). The alpha and beta chains form an alternating ring which encloses part of the gamma chain. CF(1) is attached to CF(0) by a central stalk formed by the gamma and epsilon chains, while a peripheral stalk is formed by the delta and b chains.

It localises to the cell inner membrane. The catalysed reaction is ATP + H2O + 4 H(+)(in) = ADP + phosphate + 5 H(+)(out). Functionally, produces ATP from ADP in the presence of a proton gradient across the membrane. The catalytic sites are hosted primarily by the beta subunits. The sequence is that of ATP synthase subunit beta from Xylella fastidiosa (strain 9a5c).